A 519-amino-acid chain; its full sequence is Membrane-bound lytic murein transglycosylase F (519 aa).

A signal peptide spans M1–A32. A non-LT domain region spans residues D33–G269. An LT domain region spans residues N270–R519. The active site involves E314. The tract at residues P495–R519 is disordered. A compositionally biased stretch (polar residues) spans A508 to R519.

The protein in the N-terminal section; belongs to the bacterial solute-binding protein 3 family. It in the C-terminal section; belongs to the transglycosylase Slt family.

It localises to the cell outer membrane. It carries out the reaction Exolytic cleavage of the (1-&gt;4)-beta-glycosidic linkage between N-acetylmuramic acid (MurNAc) and N-acetylglucosamine (GlcNAc) residues in peptidoglycan, from either the reducing or the non-reducing ends of the peptidoglycan chains, with concomitant formation of a 1,6-anhydrobond in the MurNAc residue.. Its function is as follows. Murein-degrading enzyme that degrades murein glycan strands and insoluble, high-molecular weight murein sacculi, with the concomitant formation of a 1,6-anhydromuramoyl product. Lytic transglycosylases (LTs) play an integral role in the metabolism of the peptidoglycan (PG) sacculus. Their lytic action creates space within the PG sacculus to allow for its expansion as well as for the insertion of various structures such as secretion systems and flagella. The sequence is that of Membrane-bound lytic murein transglycosylase F from Cronobacter sakazakii (strain ATCC BAA-894) (Enterobacter sakazakii).